Consider the following 441-residue polypeptide: C-terminal-binding protein 1 (441 aa).

The tract at residues 1-70 (MGSSHLLNKG…EIHEKVLNEA (70 aa)) is interaction with GLIS2 1. NAD(+)-binding positions include Ser100, 180–185 (IGLGRV), Asp204, 237–243 (CGLNEHN), 264–266 (TAR), and Asp290. Arg266 is a catalytic residue. The tract at residues 288–360 (ALDVHESEPF…VNKDHLTAAT (73 aa)) is interaction with GLIS2 2. Glu295 is a catalytic residue. At Ser300 the chain carries Phosphoserine. The Proton donor role is filled by His315. Position 315–318 (315–318 (HAAW)) interacts with NAD(+). The segment at 409–441 (SHGLPPVAHPPHAPSPGQTVKPEADRDHTSDQL) is disordered. Ser423 is subject to Phosphoserine. Lys429 is covalently cross-linked (Glycyl lysine isopeptide (Lys-Gly) (interchain with G-Cter in SUMO)). A compositionally biased stretch (basic and acidic residues) spans 430–441 (PEADRDHTSDQL).

The protein belongs to the D-isomer specific 2-hydroxyacid dehydrogenase family. Homo- or heterodimer. Heterodimer with CTBP2. Interacts with ELK3 (via its PXDLS motif). Interacts with RBBP8 (via its PXDLS motif). Interacts with PNN, MECOM and ZFHX1B. Interacts with ZNF366 (via PXDLS motif). Interaction with SATB1 (non-acetylated form); the interaction stabilizes its attachment to DNA and promotes transcription repression. Interacts with PRDM16; the interaction represses white adipose tissue (WAT)-specific genes expression. Interacts with GLIS2, HIPK2, FOXP1, FOXP2, HDAC4, HDAC5, HDAC9, NRIP1, WIZ and ZNF217. Interacts with BCL6; the interaction is required for BCL6 transcriptional autoinhibition and inhibition of some BCL6 target genes. Interacts with IKZF4. Interacts with MCRIP1 (unphosphorylated form, via the PXDLS motif); competitively inhibiting CTBP-ZEB1 interaction. Interacts with Bassoon/BSN; this interaction targets and anchors CTBP1 to presynapses. Interacts with SIMC1. It depends on NAD(+) as a cofactor. In terms of processing, ADP-ribosylated; when cells are exposed to brefeldin A. Post-translationally, the level of phosphorylation appears to be regulated during the cell cycle. Phosphorylation by HIPK2 on Ser-423 induces proteasomal degradation. Sumoylation on Lys-429 is promoted by the E3 SUMO-protein ligase CBX4. As to expression, expressed in a wide range of adult tissues.

The protein resides in the cytoplasm. The protein localises to the nucleus. Corepressor targeting diverse transcription regulators such as GLIS2 or BCL6. Has dehydrogenase activity. Involved in controlling the equilibrium between tubular and stacked structures in the Golgi complex. Functions in brown adipose tissue (BAT) differentiation. The polypeptide is C-terminal-binding protein 1 (Ctbp1) (Mus musculus (Mouse)).